A 236-amino-acid polypeptide reads, in one-letter code: Ribosomal RNA small subunit methyltransferase G (236 aa).

Residues glycine 80, 131–132 (AE), and arginine 148 contribute to the S-adenosyl-L-methionine site.

The protein belongs to the methyltransferase superfamily. RNA methyltransferase RsmG family.

The protein localises to the cytoplasm. Specifically methylates the N7 position of a guanine in 16S rRNA. This is Ribosomal RNA small subunit methyltransferase G from Ureaplasma parvum serovar 3 (strain ATCC 27815 / 27 / NCTC 11736).